Consider the following 320-residue polypeptide: Olfactory receptor 7C1 (320 aa).

The Extracellular segment spans residues 1-25 (METGNQTHAQEFLLLGFSATSEIQF). N5 is a glycosylation site (N-linked (GlcNAc...) asparagine). A helical transmembrane segment spans residues 26–46 (ILFGLFLSMYLVTFTGNLLII). The Cytoplasmic segment spans residues 47–54 (LAICSDSH). Residues 55–75 (LHTPMYFFLSNLSFADLCFTS) traverse the membrane as a helical segment. Residues 76–99 (TTVPKMLLNILTQNKFITYAGCLS) are Extracellular-facing. C97 and C189 are oxidised to a cystine. Residues 100–120 (QIFFFTSFGCLDNLLLTVMAY) traverse the membrane as a helical segment. Residues 121–139 (DRFVAVCHPLHYTVIMNPQ) lie on the Cytoplasmic side of the membrane. Residues 140-160 (LCGLLVLGSWCISVMGSLLET) traverse the membrane as a helical segment. The Extracellular portion of the chain corresponds to 161-197 (LTVLRLSFCTEMEIPHFFCDLLEVLKLACSDTFINNV). The chain crosses the membrane as a helical span at residues 198 to 217 (VIYFATGVLGVISFTGIFFS). Residues 218 to 237 (YYKIVFSILRISSAGRKHKA) lie on the Cytoplasmic side of the membrane. The chain crosses the membrane as a helical span at residues 238–258 (FSTCGSHLSVVTLFYGTGFGV). Residues 259 to 271 (YLSSAATPSSRTS) are Extracellular-facing. The chain crosses the membrane as a helical span at residues 272–292 (LVASVMYTMVTPMLNPFIYSL). Topologically, residues 293-313 (RNTDMKRALGRLLSRATFFNG) are cytoplasmic.

The protein belongs to the G-protein coupled receptor 1 family.

The protein resides in the cell membrane. Functionally, odorant receptor. This chain is Olfactory receptor 7C1 (OR7C1), found in Homo sapiens (Human).